Reading from the N-terminus, the 369-residue chain is Fructose-bisphosphate aldolase 2 (369 aa).

Asp-40 contacts dihydroxyacetone phosphate. 2 residues coordinate D-glyceraldehyde 3-phosphate: Ser-42 and Thr-45. Arg-49 is a binding site for beta-D-fructose 1,6-bisphosphate. Lys-113 is a D-glyceraldehyde 3-phosphate binding site. Lys-152 contributes to the dihydroxyacetone phosphate binding site. Glu-195 is a binding site for D-glyceraldehyde 3-phosphate. Glu-195 functions as the Proton acceptor in the catalytic mechanism. The dihydroxyacetone phosphate site is built by Lys-237, Ser-279, and Gly-280. Lys-237 (schiff-base intermediate with dihydroxyacetone phosphate) is an active-site residue. Residues 279–281 and Ser-307 each bind beta-D-fructose 1,6-bisphosphate; that span reads SGG. Dihydroxyacetone phosphate-binding residues include Gly-309 and Arg-310. Arg-310 contributes to the beta-D-fructose 1,6-bisphosphate binding site.

The protein belongs to the class I fructose-bisphosphate aldolase family.

It localises to the cytoplasm. The protein resides in the membrane. It is found in the host cell membrane. It carries out the reaction beta-D-fructose 1,6-bisphosphate = D-glyceraldehyde 3-phosphate + dihydroxyacetone phosphate. It functions in the pathway carbohydrate degradation; glycolysis; D-glyceraldehyde 3-phosphate and glycerone phosphate from D-glucose: step 4/4. Its function is as follows. Plays a key role in glycolysis by catalyzing the cleavage of fructose 1,6-bisphosphate into dihydroxyacetone phosphate and glyceraldehyde 3-phosphate. The polypeptide is Fructose-bisphosphate aldolase 2 (ALDO2) (Plasmodium berghei (strain Anka)).